A 185-amino-acid chain; its full sequence is Ubiquitin-fold modifier-conjugating enzyme 1 (185 aa).

Residue Cys-119 is the Glycyl thioester intermediate of the active site.

This sequence belongs to the ubiquitin-conjugating enzyme family. UFC1 subfamily.

Functionally, E2-like enzyme which forms an intermediate with UFM1 via a thioester linkage. The protein is Ubiquitin-fold modifier-conjugating enzyme 1 of Oryza sativa subsp. japonica (Rice).